The following is a 159-amino-acid chain: Small heat shock protein hspM (159 aa).

One can recognise a sHSP domain in the interval 1 to 159; the sequence is MFVLNFELAG…LSNNIKIQIN (159 aa). The disordered stretch occupies residues 35-101; that stretch reads MNNNNKNNLQ…NNNNKSSKTN (67 aa). Low complexity-rich tracts occupy residues 36–46 and 61–95; these read NNNNKNNLQIN and SSSSNNNNNNNNNNNNNNNNNNNNNNNNNSNNNNN.

This sequence belongs to the small heat shock protein (HSP20) family.

The sequence is that of Small heat shock protein hspM (hspM) from Dictyostelium discoideum (Social amoeba).